The chain runs to 208 residues: Large ribosomal subunit protein uL3 (208 aa).

The residue at position 149 (Gln149) is an N5-methylglutamine.

It belongs to the universal ribosomal protein uL3 family. As to quaternary structure, part of the 50S ribosomal subunit. Forms a cluster with proteins L14 and L19. In terms of processing, methylated by PrmB.

One of the primary rRNA binding proteins, it binds directly near the 3'-end of the 23S rRNA, where it nucleates assembly of the 50S subunit. This is Large ribosomal subunit protein uL3 from Histophilus somni (strain 129Pt) (Haemophilus somnus).